A 246-amino-acid polypeptide reads, in one-letter code: MAAAAATKILLCLPLLLLLSGWSRAGRADPHSLCYDITVIPKFRPGPRWCAVQGQVDEKTFLHYDCGNKTVTPVSPLGKKLNVTTAWKAQNPVLREVVDILTEQLRDIQLENYTPKEPLTLQARMSCEQKAEGHSSGSWQFSFDGQIFLLFDSEKRMWTTVHPGARKMKEKWENDKVVAMSFHYFSMGDCIGWLEDFLMGMDSTLEPSAGAPLAMSSGTTQLRATATTLILCCLLIILPCFILPGI.

The N-terminal stretch at 1 to 25 (MAAAAATKILLCLPLLLLLSGWSRA) is a signal peptide. Residues 29–117 (DPHSLCYDIT…IQLENYTPKE (89 aa)) are MHC class I alpha-1 like. C50 and C66 are joined by a disulfide. 2 N-linked (GlcNAc...) asparagine glycosylation sites follow: N68 and N82. The MHC class I alpha-2 like stretch occupies residues 118 to 210 (PLTLQARMSC…MDSTLEPSAG (93 aa)). Residues C127 and C190 are joined by a disulfide bond. Residue S216 coordinates a protein. Residue S217 is the site of GPI-anchor amidated serine attachment. A propeptide spans 218 to 246 (GTTQLRATATTLILCCLLIILPCFILPGI) (removed in mature form).

Belongs to the MHC class I family. As to quaternary structure, interacts with KLRK1/NKG2D. Does not bind to beta2-microglobulin. In terms of assembly, (Microbial infection) In CMV-infected cells, interacts with the viral glycoprotein UL16; this interaction causes ULBP2 retention in the endoplasmic reticulum and cis-Golgi and prevents binding to and activation of KLRK1/NKG2D, providing CMV with an immune evasion mechanism. Expressed in various types of cancer cell lines and in the fetus, but not in normal tissues.

It is found in the cell membrane. The protein localises to the endoplasmic reticulum. Its subcellular location is the secreted. In terms of biological role, binds and activates the KLRK1/NKG2D receptor, mediating natural killer cell cytotoxicity. The protein is UL16-binding protein 2 of Homo sapiens (Human).